The following is a 178-amino-acid chain: MKVNPPLAWHPAPVSAPVDLHWWLTHRGSLTRLIQDRCEHFRVEPIFQALATACIDELEVMNLRRQTRALVREVYLRCNETPVVFAHSIVRKEHLRGAWRGLSRLGNQSLGTMLFTNPLIQRTPLAFKKLKPHHPLFERACKRLQNRPADLWARRSLFILQHQPILVTEVFLPAIRRL.

Substrate is bound by residues Arg72, Leu110, and Glu169.

The protein belongs to the UbiC family.

The protein resides in the cytoplasm. The enzyme catalyses chorismate = 4-hydroxybenzoate + pyruvate. It functions in the pathway cofactor biosynthesis; ubiquinone biosynthesis. Removes the pyruvyl group from chorismate, with concomitant aromatization of the ring, to provide 4-hydroxybenzoate (4HB) for the ubiquinone pathway. The polypeptide is Probable chorismate pyruvate-lyase (Nitrosomonas europaea (strain ATCC 19718 / CIP 103999 / KCTC 2705 / NBRC 14298)).